Here is a 441-residue protein sequence, read N- to C-terminus: Ribosomal protein uS12 methylthiotransferase RimO (441 aa).

One can recognise an MTTase N-terminal domain in the interval 7 to 117; sequence ASIAMISLGC…VVLEVHRAAP (111 aa). Positions 16, 52, 81, 150, 154, and 157 each coordinate [4Fe-4S] cluster. The region spanning 136–373 is the Radical SAM core domain; sequence LTPRHYAYLK…MAHQQAISAA (238 aa). The 66-residue stretch at 376-441 folds into the TRAM domain; sequence QTRVGREIDV…DEYDLHGDAV (66 aa).

It belongs to the methylthiotransferase family. RimO subfamily. The cofactor is [4Fe-4S] cluster.

The protein localises to the cytoplasm. It carries out the reaction L-aspartate(89)-[ribosomal protein uS12]-hydrogen + (sulfur carrier)-SH + AH2 + 2 S-adenosyl-L-methionine = 3-methylsulfanyl-L-aspartate(89)-[ribosomal protein uS12]-hydrogen + (sulfur carrier)-H + 5'-deoxyadenosine + L-methionine + A + S-adenosyl-L-homocysteine + 2 H(+). Its function is as follows. Catalyzes the methylthiolation of an aspartic acid residue of ribosomal protein uS12. The protein is Ribosomal protein uS12 methylthiotransferase RimO of Bordetella petrii (strain ATCC BAA-461 / DSM 12804 / CCUG 43448).